Here is a 91-residue protein sequence, read N- to C-terminus: Cell division topological specificity factor (91 aa).

The protein belongs to the MinE family.

Its function is as follows. Prevents the cell division inhibition by proteins MinC and MinD at internal division sites while permitting inhibition at polar sites. This ensures cell division at the proper site by restricting the formation of a division septum at the midpoint of the long axis of the cell. The sequence is that of Cell division topological specificity factor from Erwinia tasmaniensis (strain DSM 17950 / CFBP 7177 / CIP 109463 / NCPPB 4357 / Et1/99).